Reading from the N-terminus, the 47-residue chain is Cytochrome b559 subunit beta (47 aa).

The chain crosses the membrane as a helical span at residues 22–38 (WLAVHTLAIPTVFFLGA). His-26 contributes to the heme binding site.

It belongs to the PsbE/PsbF family. As to quaternary structure, heterodimer of an alpha subunit and a beta subunit. PSII is composed of 1 copy each of membrane proteins PsbA, PsbB, PsbC, PsbD, PsbE, PsbF, PsbH, PsbI, PsbJ, PsbK, PsbL, PsbM, PsbT, PsbX, PsbY, PsbZ, Psb30/Ycf12, peripheral proteins PsbO, CyanoQ (PsbQ), PsbU, PsbV and a large number of cofactors. It forms dimeric complexes. The cofactor is heme b.

The protein resides in the cellular thylakoid membrane. Its function is as follows. This b-type cytochrome is tightly associated with the reaction center of photosystem II (PSII). PSII is a light-driven water:plastoquinone oxidoreductase that uses light energy to abstract electrons from H(2)O, generating O(2) and a proton gradient subsequently used for ATP formation. It consists of a core antenna complex that captures photons, and an electron transfer chain that converts photonic excitation into a charge separation. In Synechococcus sp. (strain JA-3-3Ab) (Cyanobacteria bacterium Yellowstone A-Prime), this protein is Cytochrome b559 subunit beta.